Reading from the N-terminus, the 319-residue chain is Exopolyphosphatase 2 (319 aa).

Belongs to the GppA/Ppx family. In terms of assembly, homodimer.

It catalyses the reaction [phosphate](n) + H2O = [phosphate](n-1) + phosphate + H(+). With respect to regulation, exopolyphosphatase activity is inhibited by ppGpp alarmones produced during the bacterial stringent response. Degradation of inorganic polyphosphates (polyP). Releases orthophosphate processively from the ends of the polyP chain. Prefers long-chain length polyphosphates as substrates. This chain is Exopolyphosphatase 2, found in Mycobacterium tuberculosis (strain CDC 1551 / Oshkosh).